The chain runs to 537 residues: MFS-type transporter qa-x (537 aa).

Topologically, residues 1–26 are cytoplasmic; that stretch reads MTLLALKEDRPTPKAVYNWRVYTCAA. A helical membrane pass occupies residues 27-47; the sequence is IASFASCMIGYDSAFIGTTLA. The Extracellular portion of the chain corresponds to 48–74; that stretch reads LPSFTKEFDFASYTPGALALLQSNIVS. A helical membrane pass occupies residues 75-95; the sequence is VYQAGAFFGCLFAYATSYFLG. Residues 96–98 are Cytoplasmic-facing; it reads RRK. Residues 99–119 traverse the membrane as a helical segment; it reads SLIAFSVVFIIGAAIMLAADG. At 120 to 131 the chain is on the extracellular side; the sequence is QGRGIDPIIAGR. A helical membrane pass occupies residues 132–152; that stretch reads VLAGIGVGGASNMVPIYISEL. The Cytoplasmic segment spans residues 153–160; sequence APPAVRGR. The helical transmembrane segment at 161–181 threads the bilayer; sequence LVGIYELGWQIGGLVGFWINY. The Extracellular portion of the chain corresponds to 182-195; the sequence is GVNTTMAPTRSQWL. A glycan (N-linked (GlcNAc...) asparagine) is linked at N184. A helical membrane pass occupies residues 196–216; that stretch reads IPFAVQLIPAGLLFLGSFWIP. The Cytoplasmic portion of the chain corresponds to 217-285; sequence ESPRWLYANG…SLKQRKVQWR (69 aa). The chain crosses the membrane as a helical span at residues 286 to 306; it reads FFLGGMLFFWQNGSGINAINY. Topologically, residues 307–327 are extracellular; the sequence is YSPTVFRSIGITGTDTGFLTT. Residues 328 to 349 traverse the membrane as a helical segment; sequence GIFGVVKMVLTIIWLLWLVDLV. Topologically, residues 350-352 are cytoplasmic; that stretch reads GRR. A helical membrane pass occupies residues 353–373; sequence RILFIGAAGGSLCMWFIGAYI. The Extracellular portion of the chain corresponds to 374–389; it reads KIADPGSNKAEDAKLT. A helical transmembrane segment spans residues 390–410; that stretch reads SGGIAAIFFFYLWTAFYTPSW. Residues 411–435 lie on the Cytoplasmic side of the membrane; the sequence is NGTPWVINSEMFDQNTRSLGQASAA. A helical transmembrane segment spans residues 436–456; it reads ANNWFWNFIISRFTPQMFIKM. Topologically, residues 457–458 are extracellular; that stretch reads EY. Residues 459–479 traverse the membrane as a helical segment; that stretch reads GVYFFFASLMLLSIVFIYFFL. Over 480–537 the chain is Cytoplasmic; the sequence is PETKSIPLEAMDRLFEIKPVQNANKNLMAELNFDRNPEREESSSLDDKDRVTQTENAV. Residues 514–531 are compositionally biased toward basic and acidic residues; the sequence is RNPEREESSSLDDKDRVT. The disordered stretch occupies residues 514 to 537; it reads RNPEREESSSLDDKDRVTQTENAV.

Belongs to the major facilitator superfamily. Sugar transporter (TC 2.A.1.1) family.

The protein resides in the membrane. In terms of biological role, MFS-type transporter; part of the qa gene cluster that mediates the catabolism of quinic acid (QA) and as such, allows the use of QA as a sole carbon source. Involved in the upatke of QA. The qa cluster encodes 3 inducible enymes (qa-2, qa-3 and qa-4) catalyzing the first three reactions in the catabolism of quinic acid to protocatechuic acid (also known as 3,4-Dihydroxybenzoic acid). The chain is MFS-type transporter qa-x from Neurospora crassa (strain ATCC 24698 / 74-OR23-1A / CBS 708.71 / DSM 1257 / FGSC 987).